The sequence spans 172 residues: Small ribosomal subunit protein uS13 (172 aa).

Residues Gly-131–Gly-172 form a disordered region. A compositionally biased stretch (low complexity) spans Thr-134–Ala-163.

This sequence belongs to the universal ribosomal protein uS13 family. In terms of assembly, part of the 30S ribosomal subunit. Forms a loose heterodimer with protein S19. Forms two bridges to the 50S subunit in the 70S ribosome.

Located at the top of the head of the 30S subunit, it contacts several helices of the 16S rRNA. In the 70S ribosome it contacts the 23S rRNA (bridge B1a) and protein L5 of the 50S subunit (bridge B1b), connecting the 2 subunits; these bridges are implicated in subunit movement. The polypeptide is Small ribosomal subunit protein uS13 (Sulfurisphaera tokodaii (strain DSM 16993 / JCM 10545 / NBRC 100140 / 7) (Sulfolobus tokodaii)).